The sequence spans 82 residues: Small ribosomal subunit protein bS16 (82 aa).

This sequence belongs to the bacterial ribosomal protein bS16 family.

This chain is Small ribosomal subunit protein bS16, found in Aeromonas hydrophila subsp. hydrophila (strain ATCC 7966 / DSM 30187 / BCRC 13018 / CCUG 14551 / JCM 1027 / KCTC 2358 / NCIMB 9240 / NCTC 8049).